Here is a 368-residue protein sequence, read N- to C-terminus: Chaperone protein DnaJ (368 aa).

The J domain occupies 5–65 (DYYEVLGLTK…QKKARYDQFG (61 aa)). Residues 125-207 (GKETEIEIPK…CRGEGKVQKR (83 aa)) form a CR-type zinc finger. Zn(2+) is bound by residues Cys-138, Cys-141, Cys-155, Cys-158, Cys-181, Cys-184, Cys-195, and Cys-198. 4 CXXCXGXG motif repeats span residues 138 to 145 (CETCHGSG), 155 to 162 (CSTCNGAG), 181 to 188 (CTTCHGTG), and 195 to 202 (CSTCRGEG).

It belongs to the DnaJ family. In terms of assembly, homodimer. Zn(2+) serves as cofactor.

It localises to the cytoplasm. Its function is as follows. Participates actively in the response to hyperosmotic and heat shock by preventing the aggregation of stress-denatured proteins and by disaggregating proteins, also in an autonomous, DnaK-independent fashion. Unfolded proteins bind initially to DnaJ; upon interaction with the DnaJ-bound protein, DnaK hydrolyzes its bound ATP, resulting in the formation of a stable complex. GrpE releases ADP from DnaK; ATP binding to DnaK triggers the release of the substrate protein, thus completing the reaction cycle. Several rounds of ATP-dependent interactions between DnaJ, DnaK and GrpE are required for fully efficient folding. Also involved, together with DnaK and GrpE, in the DNA replication of plasmids through activation of initiation proteins. The sequence is that of Chaperone protein DnaJ from Lysinibacillus sphaericus (Bacillus sphaericus).